A 300-amino-acid polypeptide reads, in one-letter code: Tyrosine recombinase XerC (300 aa).

Residues threonine 2–leucine 88 enclose the Core-binding (CB) domain. In terms of domain architecture, Tyr recombinase spans arginine 109–methionine 294. Catalysis depends on residues arginine 150, lysine 174, histidine 246, arginine 249, and histidine 272. Catalysis depends on tyrosine 281, which acts as the O-(3'-phospho-DNA)-tyrosine intermediate.

Belongs to the 'phage' integrase family. XerC subfamily. As to quaternary structure, forms a cyclic heterotetrameric complex composed of two molecules of XerC and two molecules of XerD.

It is found in the cytoplasm. Its function is as follows. Site-specific tyrosine recombinase, which acts by catalyzing the cutting and rejoining of the recombining DNA molecules. The XerC-XerD complex is essential to convert dimers of the bacterial chromosome into monomers to permit their segregation at cell division. It also contributes to the segregational stability of plasmids. The chain is Tyrosine recombinase XerC from Listeria innocua serovar 6a (strain ATCC BAA-680 / CLIP 11262).